We begin with the raw amino-acid sequence, 112 residues long: Large ribosomal subunit protein eL30 (112 aa).

The protein belongs to the eukaryotic ribosomal protein eL30 family.

The polypeptide is Large ribosomal subunit protein eL30 (RPL30) (Zea mays (Maize)).